The sequence spans 576 residues: Putative export ATP-binding/permease protein RT0691 (576 aa).

The region spanning 20 to 303 (LIIVMISLLS…IFELLSEIHL (284 aa)) is the ABC transmembrane type-1 domain. The next 6 helical transmembrane spans lie at 21 to 41 (IIVMISLLSVSASLLLIGSVF), 61 to 81 (ILYICLLIVILSVASFFRSYF), 135 to 155 (FLSFFIRNSVMLIGGITLMFF), 158 to 178 (FKLASIVIVTIPILLVPLIKF), 242 to 262 (ALFFAISIAVIFLTITLIVWI), and 277 to 297 (IISFIYYAIIAGVSSGGIFEL). The region spanning 336–572 (IEFKNVDFTY…SEIYRNICRE (237 aa)) is the ABC transporter domain. 371 to 378 (GRSGAGKS) is a binding site for ATP.

It belongs to the ABC transporter superfamily. Homodimer.

The protein localises to the cell inner membrane. Functionally, part of an ABC transporter complex. Transmembrane domains (TMD) form a pore in the inner membrane and the ATP-binding domain (NBD) is responsible for energy generation. This Rickettsia typhi (strain ATCC VR-144 / Wilmington) protein is Putative export ATP-binding/permease protein RT0691.